The primary structure comprises 506 residues: Lysine--tRNA ligase (506 aa).

2 residues coordinate Mg(2+): E416 and E423.

This sequence belongs to the class-II aminoacyl-tRNA synthetase family. As to quaternary structure, homodimer. Mg(2+) serves as cofactor.

The protein localises to the cytoplasm. The enzyme catalyses tRNA(Lys) + L-lysine + ATP = L-lysyl-tRNA(Lys) + AMP + diphosphate. The sequence is that of Lysine--tRNA ligase from Xylella fastidiosa (strain M12).